The sequence spans 244 residues: NAD(P)H-quinone oxidoreductase subunit K (244 aa).

Positions 60, 61, 125, and 156 each coordinate [4Fe-4S] cluster. Residues Thr-213–Asn-244 are disordered. Residues Ser-221 to Ile-238 show a composition bias toward basic and acidic residues.

It belongs to the complex I 20 kDa subunit family. NDH-1 can be composed of about 15 different subunits; different subcomplexes with different compositions have been identified which probably have different functions. [4Fe-4S] cluster serves as cofactor.

The protein resides in the cellular thylakoid membrane. The catalysed reaction is a plastoquinone + NADH + (n+1) H(+)(in) = a plastoquinol + NAD(+) + n H(+)(out). It carries out the reaction a plastoquinone + NADPH + (n+1) H(+)(in) = a plastoquinol + NADP(+) + n H(+)(out). NDH-1 shuttles electrons from an unknown electron donor, via FMN and iron-sulfur (Fe-S) centers, to quinones in the respiratory and/or the photosynthetic chain. The immediate electron acceptor for the enzyme in this species is believed to be plastoquinone. Couples the redox reaction to proton translocation, and thus conserves the redox energy in a proton gradient. Cyanobacterial NDH-1 also plays a role in inorganic carbon-concentration. This Prochlorococcus marinus (strain MIT 9301) protein is NAD(P)H-quinone oxidoreductase subunit K.